Consider the following 248-residue polypeptide: Cytochrome c oxidase subunit 2 (248 aa).

Residues 1–12 form the signal peptide; sequence MLLMNLFTIINN. Topologically, residues 13 to 39 are mitochondrial intermembrane; sequence DVPTPYNMYFQDSTTPHQEGILELHDN. Residues 40–61 traverse the membrane as a helical segment; the sequence is IMFYMLTVLGLVSWMMIIIIKD. Residues 62–79 are Mitochondrial matrix-facing; it reads YKNNPITYKYIKHGQMIE. A helical membrane pass occupies residues 80-104; sequence IIWTILPAIILLMIAFPSFILLYLC. The Mitochondrial intermembrane segment spans residues 105–248; it reads DEVISPAMTI…PTFLTWLNEQ (144 aa). Cu cation-binding residues include histidine 183, cysteine 218, glutamate 220, cysteine 222, histidine 226, and methionine 229. Glutamate 220 provides a ligand contact to Mg(2+).

This sequence belongs to the cytochrome c oxidase subunit 2 family. Component of the cytochrome c oxidase (complex IV, CIV), a multisubunit enzyme composed of a catalytic core of 3 subunits and several supernumerary subunits. The complex exists as a monomer or a dimer and forms supercomplexes (SCs) in the inner mitochondrial membrane with ubiquinol-cytochrome c oxidoreductase (cytochrome b-c1 complex, complex III, CIII). It depends on Cu cation as a cofactor. In terms of processing, the signal sequence of COX2 is processed by IMP1.

The protein resides in the mitochondrion inner membrane. It carries out the reaction 4 Fe(II)-[cytochrome c] + O2 + 8 H(+)(in) = 4 Fe(III)-[cytochrome c] + 2 H2O + 4 H(+)(out). In terms of biological role, component of the cytochrome c oxidase, the last enzyme in the mitochondrial electron transport chain which drives oxidative phosphorylation. The respiratory chain contains 3 multisubunit complexes succinate dehydrogenase (complex II, CII), ubiquinol-cytochrome c oxidoreductase (cytochrome b-c1 complex, complex III, CIII) and cytochrome c oxidase (complex IV, CIV), that cooperate to transfer electrons derived from NADH and succinate to molecular oxygen, creating an electrochemical gradient over the inner membrane that drives transmembrane transport and the ATP synthase. Cytochrome c oxidase is the component of the respiratory chain that catalyzes the reduction of oxygen to water. Electrons originating from reduced cytochrome c in the intermembrane space (IMS) are transferred via the dinuclear copper A center (CU(A)) of subunit 2 and heme A of subunit 1 to the active site in subunit 1, a binuclear center (BNC) formed by heme A3 and copper B (CU(B)). The BNC reduces molecular oxygen to 2 water molecules using 4 electrons from cytochrome c in the IMS and 4 protons from the mitochondrial matrix. The protein is Cytochrome c oxidase subunit 2 (COX2) of Eremothecium gossypii (strain ATCC 10895 / CBS 109.51 / FGSC 9923 / NRRL Y-1056) (Yeast).